Reading from the N-terminus, the 110-residue chain is MSDNQRIRIRLKAFDHRLIDRSTREIVETARRTGAIIRGPILLPTKIERYTVLISPNIDKDARDQYEIRTHKRLVDISEPTDKTVDALMKLDLAAGVDVQIELLNKKSGA.

The protein belongs to the universal ribosomal protein uS10 family. Part of the 30S ribosomal subunit.

Its function is as follows. Involved in the binding of tRNA to the ribosomes. The sequence is that of Small ribosomal subunit protein uS10 from Coxiella burnetii (strain Dugway 5J108-111).